Here is a 1228-residue protein sequence, read N- to C-terminus: Structural maintenance of chromosomes protein 1 (1228 aa).

32–39 is a binding site for ATP; that stretch reads GPNGAGKS. Residues 197-510 adopt a coiled-coil conformation; the sequence is NKKRGINAEL…ESKQDAKKRE (314 aa). The 114-residue stretch at 522–635 folds into the SMC hinge domain; that stretch reads VKGRIIDLCT…CDSMTVARDL (114 aa). Coiled-coil stretches lie at residues 710–783, 814–926, and 984–1068; these read KLHS…KIFS, EFTK…EIDR, and VEVD…KRLQ.

It belongs to the SMC family. SMC1 subfamily. In terms of assembly, cohesin complexes are composed of the psm1/smc1 and psm3/smc3 heterodimer attached via their SMC hinge domain, rad21/scc1 which link them, and psc3/scc3, which interacts with rad21.

The protein localises to the nucleus. It localises to the chromosome. Functionally, involved in chromosome cohesion during cell cycle and in DNA repair. Central component of cohesin complex. The cohesin complex is required for the cohesion of sister chromatids after DNA replication. The cohesin complex apparently forms a large proteinaceous ring within which sister chromatids can be trapped. At anaphase, the complex is cleaved and dissociates from chromatin, allowing sister chromatids to segregate. This chain is Structural maintenance of chromosomes protein 1 (psm1), found in Schizosaccharomyces pombe (strain 972 / ATCC 24843) (Fission yeast).